A 209-amino-acid polypeptide reads, in one-letter code: Small ribosomal subunit protein uS4 (209 aa).

Positions 98 to 164 constitute an S4 RNA-binding domain; the sequence is SRLDNVVYRG…TPFIVARETA (67 aa).

Belongs to the universal ribosomal protein uS4 family. As to quaternary structure, part of the 30S ribosomal subunit. Contacts protein S5. The interaction surface between S4 and S5 is involved in control of translational fidelity.

In terms of biological role, one of the primary rRNA binding proteins, it binds directly to 16S rRNA where it nucleates assembly of the body of the 30S subunit. Functionally, with S5 and S12 plays an important role in translational accuracy. This chain is Small ribosomal subunit protein uS4, found in Frankia alni (strain DSM 45986 / CECT 9034 / ACN14a).